We begin with the raw amino-acid sequence, 324 residues long: Cytochrome f (324 aa).

The signal sequence occupies residues 1–30 (MNMRFSPKALVRQLGRLSLVACLSLGLLGA). 4 residues coordinate heme: tyrosine 42, cysteine 62, cysteine 65, and histidine 66. A helical membrane pass occupies residues 290–310 (VLGVIAFFFAVMLAQIMLVLK).

It belongs to the cytochrome f family. The 4 large subunits of the cytochrome b6-f complex are cytochrome b6, subunit IV (17 kDa polypeptide, PetD), cytochrome f and the Rieske protein, while the 4 small subunits are PetG, PetL, PetM and PetN. The complex functions as a dimer. Heme serves as cofactor.

It localises to the cellular thylakoid membrane. Component of the cytochrome b6-f complex, which mediates electron transfer between photosystem II (PSII) and photosystem I (PSI), cyclic electron flow around PSI, and state transitions. The chain is Cytochrome f from Synechococcus elongatus (strain ATCC 33912 / PCC 7942 / FACHB-805) (Anacystis nidulans R2).